Consider the following 681-residue polypeptide: Probable L-type lectin-domain containing receptor kinase VII.2 (681 aa).

An N-terminal signal peptide occupies residues 1 to 23 (MFSKVSILLFSLASLLLFRSTTG). The segment at 24–260 (IEFIYNSNFT…SHRILSWSFS (237 aa)) is legume-lectin like. Topologically, residues 24–290 (IEFIYNSNFT…SGDSVLKSKG (267 aa)) are extracellular. N-linked (GlcNAc...) asparagine glycans are attached at residues Asn31, Asn42, Asn56, Asn72, Asn126, Asn202, Asn207, Asn228, and Asn263. The chain crosses the membrane as a helical span at residues 291 to 311 (FIAGVSSGVVLLVSVIGLLCF). Topologically, residues 312 to 681 (YVVRRRRQRL…QTYDSILHGR (370 aa)) are cytoplasmic. One can recognise a Protein kinase domain in the interval 349 to 624 (FSDENMIGYG…VVQILEQGRL (276 aa)). ATP-binding positions include 355-363 (IGYGGNSKV) and Lys376. Catalysis depends on Asp475, which acts as the Proton acceptor.

It in the C-terminal section; belongs to the protein kinase superfamily. Ser/Thr protein kinase family. In the N-terminal section; belongs to the leguminous lectin family.

The protein localises to the cell membrane. It catalyses the reaction L-seryl-[protein] + ATP = O-phospho-L-seryl-[protein] + ADP + H(+). The enzyme catalyses L-threonyl-[protein] + ATP = O-phospho-L-threonyl-[protein] + ADP + H(+). The protein is Probable L-type lectin-domain containing receptor kinase VII.2 (LECRK72) of Arabidopsis thaliana (Mouse-ear cress).